We begin with the raw amino-acid sequence, 876 residues long: MVALSHLGSALQLGSLWGFPRSPFRLLGKRSLPEGVANGIEVYSTKINSKVTSRFAHNVVTTRVVNHADTAKEVSFDVELPKTAFITNFTLTIDGVIYPGNVKEKEVAKKQYEKAVSQGKTAGLVKASGRKLEKFTVSVNVAAGSKVTFELTYEELLKRHKGKYEMYLKVQPKQLVKHFEIEVDIFEPQGISMLDAEASFITNDLLGSALTKSFSGKKGHVSFKPSLDQQRPCPTCTDSLLNGDFTITYDVNRESPGNVQIVNGYFVHFFAPQGLPVVPKNVAFVIDISGSMAGRKLEQTKEALLRILEDMKKEDYLNFILFSGDVSTWKEHLVQATPENLQEARTFVKSMEDKGMTNINDGLLRGISMLNKAREEHRVPERSTSIVIMLTDGDANVGESRPEKIQENVRNAIGGKFPLYNLGFGNNLNYNFLENMALENHGFARRIYEDSDADLQLQGFYEEVANPLLTGVEVEYPENAILDLTQNTYQHFYDGSEIVVAGRLVDEDMNSFKADVKGHGATNDLTFTEEVDMKEMEKALQERDYIFGNYIERLWAYLTIEQLLEKRKNAHGEEKENLTARALDLSLKYHFVTPLTSMVVTKPEDNEDERAIADKPGEDAEASYQPPQNPYYYVDGDPHFIIQVPEKDDALCFNIDEAPGTVLRLIQDPVTGLTVNGQIIGDKRGSPDSKTKKTYFGKLGIANAQMDFQVEVTTEKVTLWNRAVQSTFSWLDTVTVMQDGLSMMINRKNMVVSFGDGVTFVVVLHQVWKKHPVHRDFLGFYVVDSHRMSAQTHGLLGQFFQPFDFKVSDIRPGSDPTKPDATLLVKNHQLIVTRGSQKDYRKDASIGTKVVRWFVYNNGEGLIDGVHTDYIVPNLF.

Positions 1–18 (MVALSHLGSALQLGSLWG) are cleaved as a signal peptide. A propeptide spanning residues 19–31 (FPRSPFRLLGKRS) is cleaved from the precursor. The 130-residue stretch at 26 to 155 (LLGKRSLPEG…KVTFELTYEE (130 aa)) folds into the VIT domain. Residue Asn88 is glycosylated (N-linked (GlcNAc...) asparagine). In terms of domain architecture, VWFA spans 281-464 (NVAFVIDISG…LQLQGFYEEV (184 aa)). N-linked (GlcNAc...) asparagine glycosylation is present at Asn577. Asp637 carries the post-translational modification Aspartate 1-(chondroitin 4-sulfate)-ester. The propeptide occupies 638–876 (PHFIIQVPEK…HTDYIVPNLF (239 aa)).

This sequence belongs to the ITIH family. I-alpha-I plasma protease inhibitors are assembled from one or two heavy chains (HC) and one light chain, bikunin. Pre-alpha-inhibitor (P-alpha-I) is composed of ITIH3/HC3 and bikunin. Heavy chains are linked to bikunin via chondroitin 4-sulfate esterified to the alpha-carboxyl of the C-terminal aspartate after propeptide cleavage.

It localises to the secreted. Functionally, may act as a carrier of hyaluronan in serum or as a binding protein between hyaluronan and other matrix protein, including those on cell surfaces in tissues to regulate the localization, synthesis and degradation of hyaluronan which are essential to cells undergoing biological processes. This is Inter-alpha-trypsin inhibitor heavy chain H3 (ITIH3) from Pongo abelii (Sumatran orangutan).